We begin with the raw amino-acid sequence, 180 residues long: Large ribosomal subunit protein uL6 (180 aa).

Belongs to the universal ribosomal protein uL6 family. Part of the 50S ribosomal subunit.

Its function is as follows. This protein binds to the 23S rRNA, and is important in its secondary structure. It is located near the subunit interface in the base of the L7/L12 stalk, and near the tRNA binding site of the peptidyltransferase center. The chain is Large ribosomal subunit protein uL6 from Thermus thermophilus (strain ATCC BAA-163 / DSM 7039 / HB27).